Reading from the N-terminus, the 147-residue chain is Hemoglobin subunit gamma (147 aa).

One can recognise a Globin domain in the interval 3–147 (NFTAEDKAAI…VASALASRYH (145 aa)). 2 residues coordinate heme b: His-64 and His-93.

The protein belongs to the globin family. As to quaternary structure, heterotetramer of two alpha chains and two gamma chains in fetal hemoglobin (Hb F). As to expression, red blood cells.

In terms of biological role, gamma chains make up the fetal hemoglobin F, in combination with alpha chains. The chain is Hemoglobin subunit gamma (HBG) from Lagothrix lagotricha (Brown woolly monkey).